The primary structure comprises 477 residues: Kinesin-like protein KIN-1 (477 aa).

The Kinesin motor domain occupies 3–330 (NVTVCVRFRP…VRFGTRTKLI (328 aa)). 86–93 (GQTGAGKT) provides a ligand contact to ATP. A coiled-coil region spans residues 402-451 (QDAASQEVSLLTQAVEELKETVEELTDENERLRGELELAQEAAAAAAAAR).

The protein belongs to the TRAFAC class myosin-kinesin ATPase superfamily. Kinesin family. KIN-1 subfamily. As to expression, widely expressed. Expressed in young roots and leaves, in mature roots, culm, sheath and leaves, and in panicles at various developmental stages. Strongest expression is detected in panicles. In the panicle, expression is detected in anthers, glumme, lemma and palea. In the spikelet, expression is detected in both microsporocyte and the anther walls.

Its subcellular location is the cytoplasm. In terms of biological role, kinesin-like motor protein that exhibits microtubule-stimulated ATPase activity. Plays an essential role in male meiotic chromosomal dynamics, male gametogenesis and anther dehiscence. May play a minor and nonessential role in regulating meiotic spindle formation. The sequence is that of Kinesin-like protein KIN-1 from Oryza sativa subsp. japonica (Rice).